We begin with the raw amino-acid sequence, 337 residues long: tRNA N6-adenosine threonylcarbamoyltransferase (337 aa).

Positions 111 and 115 each coordinate Fe cation. Residues 134-138 (LVSGG), Asp167, Gly180, and Asn272 each bind substrate. Asp300 lines the Fe cation pocket.

This sequence belongs to the KAE1 / TsaD family. It depends on Fe(2+) as a cofactor.

The protein resides in the cytoplasm. It carries out the reaction L-threonylcarbamoyladenylate + adenosine(37) in tRNA = N(6)-L-threonylcarbamoyladenosine(37) in tRNA + AMP + H(+). Required for the formation of a threonylcarbamoyl group on adenosine at position 37 (t(6)A37) in tRNAs that read codons beginning with adenine. Is involved in the transfer of the threonylcarbamoyl moiety of threonylcarbamoyl-AMP (TC-AMP) to the N6 group of A37, together with TsaE and TsaB. TsaD likely plays a direct catalytic role in this reaction. The chain is tRNA N6-adenosine threonylcarbamoyltransferase from Yersinia enterocolitica serotype O:8 / biotype 1B (strain NCTC 13174 / 8081).